The sequence spans 34 residues: Photosystem II reaction center protein Psb30 (34 aa).

Residues 5-25 (VLFQLTALIFVVAAGPLVIVL) traverse the membrane as a helical segment.

The protein belongs to the Psb30/Ycf12 family. PSII is composed of 1 copy each of membrane proteins PsbA, PsbB, PsbC, PsbD, PsbE, PsbF, PsbH, PsbI, PsbJ, PsbK, PsbL, PsbM, PsbT, PsbX, PsbY, PsbZ, Psb30/Ycf12, peripheral proteins of the oxygen-evolving complex and a large number of cofactors. It forms dimeric complexes.

It is found in the plastid. The protein resides in the chloroplast thylakoid membrane. In terms of biological role, a core subunit of photosystem II (PSII), probably helps stabilize the reaction center. The protein is Photosystem II reaction center protein Psb30 of Tupiella akineta (Green alga).